Here is a 593-residue protein sequence, read N- to C-terminus: Inactive metallocarboxypeptidase ECM14 (593 aa).

Residues 1-22 (MHFSVRLSLLLTLASSLPLVSA) form the signal peptide. Residues 23–184 (IPQHEDQAYT…QTIYESYPKT (162 aa)) constitute a propeptide that is removed on maturation. A disordered region spans residues 180-210 (SYPKTNPSSPSQQGPTTRRFSPSASTSKTKP). The span at 182–210 (PKTNPSSPSQQGPTTRRFSPSASTSKTKP) shows a compositional bias: polar residues. Residues 220–546 (DYQPLSVLLP…RAMVAMGKFL (327 aa)) form the Peptidase M14 domain. His285 and Glu288 together coordinate Zn(2+). Substrate contacts are provided by residues 285–288 (HARE), Arg343, and 360–361 (DH). Cys354 and Cys377 are joined by a disulfide. Residue Asn370 is glycosylated (N-linked (GlcNAc...) asparagine). A Zn(2+)-binding site is contributed by His417. Residue 418–419 (SY) coordinates substrate. Residues 557 to 593 (NGPHAAEETQNYDDDFEEDEAEEDSDVFRAQGDDMSS) are disordered. The segment covering 566–581 (QNYDDDFEEDEAEEDS) has biased composition (acidic residues).

The protein belongs to the peptidase M14 family. Requires Zn(2+) as cofactor.

It localises to the vacuole. Its subcellular location is the secreted. In terms of biological role, inactive carboxypeptidase that may play a role in cell wall organization and biogenesis. This Arthroderma gypseum (strain ATCC MYA-4604 / CBS 118893) (Microsporum gypseum) protein is Inactive metallocarboxypeptidase ECM14 (ECM14).